We begin with the raw amino-acid sequence, 164 residues long: Ribonuclease H (164 aa).

Residues 9–150 (DMPRVTIYTD…ADTLANAATD (142 aa)) enclose the RNase H type-1 domain. Positions 18, 56, 78, and 142 each coordinate Mg(2+).

This sequence belongs to the RNase H family. Monomer. Requires Mg(2+) as cofactor.

It localises to the cytoplasm. The enzyme catalyses Endonucleolytic cleavage to 5'-phosphomonoester.. Its function is as follows. Endonuclease that specifically degrades the RNA of RNA-DNA hybrids. This Chromohalobacter salexigens (strain ATCC BAA-138 / DSM 3043 / CIP 106854 / NCIMB 13768 / 1H11) protein is Ribonuclease H.